The chain runs to 246 residues: Phosphonates import ATP-binding protein PhnC (246 aa).

The ABC transporter domain occupies 2 to 246; that stretch reads IKFENVSKVY…ILDEVYRKEG (245 aa). 35–42 provides a ligand contact to ATP; sequence GTSGAGKS.

It belongs to the ABC transporter superfamily. Phosphonates importer (TC 3.A.1.9.1) family. In terms of assembly, the complex is composed of two ATP-binding proteins (PhnC), two transmembrane proteins (PhnE) and a solute-binding protein (PhnD).

Its subcellular location is the cell membrane. It catalyses the reaction phosphonate(out) + ATP + H2O = phosphonate(in) + ADP + phosphate + H(+). In terms of biological role, part of the ABC transporter complex PhnCDE involved in phosphonates import. Responsible for energy coupling to the transport system. The chain is Phosphonates import ATP-binding protein PhnC from Lactococcus lactis subsp. cremoris (strain SK11).